The chain runs to 475 residues: 3-isopropylmalate dehydratase large subunit (475 aa).

3 residues coordinate [4Fe-4S] cluster: C349, C409, and C412.

It belongs to the aconitase/IPM isomerase family. LeuC type 1 subfamily. In terms of assembly, heterodimer of LeuC and LeuD. The cofactor is [4Fe-4S] cluster.

It carries out the reaction (2R,3S)-3-isopropylmalate = (2S)-2-isopropylmalate. It functions in the pathway amino-acid biosynthesis; L-leucine biosynthesis; L-leucine from 3-methyl-2-oxobutanoate: step 2/4. Its function is as follows. Catalyzes the isomerization between 2-isopropylmalate and 3-isopropylmalate, via the formation of 2-isopropylmaleate. The polypeptide is 3-isopropylmalate dehydratase large subunit (Cereibacter sphaeroides (strain ATCC 17029 / ATH 2.4.9) (Rhodobacter sphaeroides)).